Consider the following 280-residue polypeptide: Ribosomal RNA small subunit methyltransferase A (280 aa).

The S-adenosyl-L-methionine site is built by H15, L17, G42, E64, D89, and N109.

This sequence belongs to the class I-like SAM-binding methyltransferase superfamily. rRNA adenine N(6)-methyltransferase family. RsmA subfamily.

The protein resides in the cytoplasm. The catalysed reaction is adenosine(1518)/adenosine(1519) in 16S rRNA + 4 S-adenosyl-L-methionine = N(6)-dimethyladenosine(1518)/N(6)-dimethyladenosine(1519) in 16S rRNA + 4 S-adenosyl-L-homocysteine + 4 H(+). Its function is as follows. Specifically dimethylates two adjacent adenosines (A1518 and A1519) in the loop of a conserved hairpin near the 3'-end of 16S rRNA in the 30S particle. May play a critical role in biogenesis of 30S subunits. This chain is Ribosomal RNA small subunit methyltransferase A, found in Synechococcus sp. (strain WH7803).